The following is a 104-amino-acid chain: uncharacterized protein (104 aa).

The next 2 membrane-spanning stretches (helical) occupy residues 45–65 (LYGI…IGVF) and 70–90 (LYLS…AKGL).

It is found in the membrane. This is an uncharacterized protein from Saccharomyces cerevisiae (strain ATCC 204508 / S288c) (Baker's yeast).